The primary structure comprises 171 residues: Prolyl-tRNA synthetase associated domain-containing protein 1 (171 aa).

The protein belongs to the PRORSD1 family.

The sequence is that of Prolyl-tRNA synthetase associated domain-containing protein 1 (PRORSD1) from Bos taurus (Bovine).